Here is a 325-residue protein sequence, read N- to C-terminus: Mediator of RNA polymerase II transcription subunit 30 (325 aa).

3 stretches are compositionally biased toward low complexity: residues 1-11 (MWKYGQNQGNQ), 109-122 (PPQQ…MGPQ), and 132-154 (GPQQ…QQQQ). Disordered regions lie at residues 1–26 (MWKY…MMPM) and 109–176 (PPQQ…LAIS). The span at 158–169 (GSGGAPGAGGVG) shows a compositional bias: gly residues.

This sequence belongs to the Mediator complex subunit 30 family. Component of the Mediator complex.

The protein localises to the nucleus. Component of the Mediator complex, a coactivator involved in the regulated transcription of nearly all RNA polymerase II-dependent genes. Mediator functions as a bridge to convey information from gene-specific regulatory proteins to the basal RNA polymerase II transcription machinery. Mediator is recruited to promoters by direct interactions with regulatory proteins and serves as a scaffold for the assembly of a functional preinitiation complex with RNA polymerase II and the general transcription factors. The polypeptide is Mediator of RNA polymerase II transcription subunit 30 (MED30) (Drosophila pseudoobscura pseudoobscura (Fruit fly)).